Consider the following 1202-residue polypeptide: Metabotropic glycine receptor (1202 aa).

The first 24 residues, 1–24, serve as a signal peptide directing secretion; that stretch reads MGAMAYSLLLCLLLAHLGLGEVGA. Residues 25–62 form a disordered region; the sequence is SLDPSERPDSSRERTSRGKQHGQQLPRASAPDPSIPWS. At 25-417 the chain is on the extracellular side; sequence SLDPSERPDS…CFVQEDKYLR (393 aa). Basic and acidic residues predominate over residues 28–40; sequence PSERPDSSRERTS. Residues 85–281 form a cache-like region region; the sequence is YLYTGDFHQL…CENGSYKPGW (197 aa). Asn-98 and Asn-143 each carry an N-linked (GlcNAc...) asparagine glycan. Cys-99 and Cys-272 are joined by a disulfide. Residues Ser-172 and Arg-173 each coordinate glycine. Asn-215 carries N-linked (GlcNAc...) asparagine glycosylation. The segment at 234–253 is disordered; sequence LHRRGSNQGPRGLGHSWRRR. Residue Glu-271 coordinates glycine. Asn-274 carries N-linked (GlcNAc...) asparagine glycosylation. Asp-307 lines the glycine pocket. N-linked (GlcNAc...) asparagine glycosylation is present at Asn-333. Residues 418–439 form a helical membrane-spanning segment; the sequence is LAIISFQALCMLLDFVSMLVVY. The Cytoplasmic segment spans residues 440–451; it reads HFRKAKSIRASG. The helical transmembrane segment at 452-474 threads the bilayer; that stretch reads LILLETILFGSLLLYFPVVILYF. The Extracellular segment spans residues 475-478; the sequence is EPST. The chain crosses the membrane as a helical span at residues 479–501; it reads FRCILLRWVRLLGFATVYGTVTL. A disulfide bridge links Cys-481 with Cys-573. Topologically, residues 502-525 are cytoplasmic; sequence KLHRVLKVFLSRTAQRIPYMTGGR. Residues 526–547 form a helical membrane-spanning segment; the sequence is VMRMLAVIVLVVFWFLVGWTSS. The Extracellular segment spans residues 548-576; it reads MCQNLERDILLVGQGQTSDNLTFNMCLID. The chain crosses the membrane as a helical span at residues 577–597; it reads RWDYMTAVAEFLFLLWGIYLC. The Cytoplasmic portion of the chain corresponds to 598–611; the sequence is YAVRTVPSAFHEPR. A helical membrane pass occupies residues 612-633; the sequence is YMAVAVHNELIITAIFHTIRFV. The Extracellular portion of the chain corresponds to 634 to 642; that stretch reads LASRLQPDW. The helical transmembrane segment at 643–664 threads the bilayer; it reads MLMLYFAHTHLTVTVTIGLLLI. Residues 665–1202 are Cytoplasmic-facing; sequence PKFSHSSNNP…SASKIPGPRK (538 aa). 3 positions are modified to phosphoserine: Ser-694, Ser-705, and Ser-708. 2 disordered regions span residues 757–899 and 914–995; these read RITE…TSML and LGLA…QIKD. Composition is skewed to basic and acidic residues over residues 769-781 and 819-828; these read CSKEDKEGTDHSA and STYDHVRDQT. Lys-774 participates in a covalent cross-link: Glycyl lysine isopeptide (Lys-Gly) (interchain with G-Cter in ubiquitin). Over residues 845-856 the composition is skewed to low complexity; the sequence is ENSTLESLSSKK. Position 865 is a phosphoserine (Ser-865). The segment covering 925–943 has biased composition (basic and acidic residues); the sequence is MEDRAKSQKPQPKDRETNR. 2 stretches are compositionally biased toward polar residues: residues 944–958 and 975–994; these read KYSNSDNTETNPNSN and QRVNLPTANPDASSSTTQIK. Phosphoserine is present on Ser-946. Positions 1002–1006 match the VCPWE motif 1 motif; the sequence is VCPWE. Ser-1061 is modified (phosphoserine). Positions 1067-1071 match the VCPWE motif 2 motif; the sequence is VCPWE. Ser-1076 is modified (phosphoserine). Composition is skewed to polar residues over residues 1132–1144 and 1151–1162; these read QMGDQEKQTSSSV and CISSNNSPQPLT. Residues 1132–1162 are disordered; that stretch reads QMGDQEKQTSSSVDIIPGSCISSNNSPQPLT. The VCPWE motif 3 signature appears at 1167–1171; that stretch reads VCPWE.

Belongs to the G-protein coupled receptor 3 family. Homodimer. Associates with the RGS7-GNB5 complex, promoting its localization to the cell membrane and regulating its GTPase activator activity. Interacts (via VCPWE motifs) with GNAO1. Interacts with GPC4. Interacts with EGFLAM.

The protein localises to the cell membrane. The protein resides in the postsynaptic cell membrane. It localises to the presynaptic cell membrane. It is found in the nucleus. In terms of biological role, metabotropic receptor for glycine that controls synapse formation and function in the brain. Acts as an atypical G-protein coupled receptor that recruits and regulates the RGS7-GNB5 complex instead of activating G proteins. In absence of glycine ligand, promotes the GTPase activator activity of RGS7, increasing the GTPase activity of G protein alpha subunits, thereby driving them into their inactive GDP-bound form. Glycine-binding changes the conformation of the intracellular surface, inhibiting the GTPase activator activity of the RGS7-GNB5 complex, promoting G protein alpha subunits into their active GTP-bound form and regulating cAMP levels. Also able to bind taurine, a compound closely related to glycine, but with a two-fold lower affinity. Glycine receptor-dependent regulation of cAMP controls key ion channels, kinases and neurotrophic factors involved in neuronal excitability and synaptic transmission. Plays a pivotal role in regulating mood and cognition via its ability to regulate neuronal excitability in L2/L3 pyramidal neurons of the prefrontal cortex. Also involved in spatial learning by regulating hippocampal CA1 neuronal excitability. Acts as a synaptic organizer in the hippocampus, required for proper mossy fiber-CA3 neurocircuitry establishment, structure and function: induces presynaptic differentiation in contacting axons via its interaction with GPC4. In addition to glycine, may also act as a receptor for osteocalcin (BGLAP) hormone: osteocalcin-binding initiates a signaling response that prevents neuronal apoptosis in the hippocampus and regulates the synthesis of neurotransmitters. The protein is Metabotropic glycine receptor of Rattus norvegicus (Rat).